The following is a 421-amino-acid chain: Gamma-glutamyl phosphate reductase (421 aa).

It belongs to the gamma-glutamyl phosphate reductase family.

It is found in the cytoplasm. It catalyses the reaction L-glutamate 5-semialdehyde + phosphate + NADP(+) = L-glutamyl 5-phosphate + NADPH + H(+). The protein operates within amino-acid biosynthesis; L-proline biosynthesis; L-glutamate 5-semialdehyde from L-glutamate: step 2/2. Functionally, catalyzes the NADPH-dependent reduction of L-glutamate 5-phosphate into L-glutamate 5-semialdehyde and phosphate. The product spontaneously undergoes cyclization to form 1-pyrroline-5-carboxylate. The chain is Gamma-glutamyl phosphate reductase from Pseudomonas syringae pv. tomato (strain ATCC BAA-871 / DC3000).